A 278-amino-acid chain; its full sequence is Elongation factor Ts (278 aa).

The tract at residues 79–82 (TDFV) is involved in Mg(2+) ion dislocation from EF-Tu.

It belongs to the EF-Ts family.

Its subcellular location is the cytoplasm. Its function is as follows. Associates with the EF-Tu.GDP complex and induces the exchange of GDP to GTP. It remains bound to the aminoacyl-tRNA.EF-Tu.GTP complex up to the GTP hydrolysis stage on the ribosome. This chain is Elongation factor Ts, found in Borrelia duttonii (strain Ly).